We begin with the raw amino-acid sequence, 324 residues long: Homeobox protein Nkx-2.5 (324 aa).

Positions 138 to 197 form a DNA-binding region, homeobox; the sequence is RRKPRVLFSQAQVYELERRFKQQRYLSAPERDQLASVLKLTSTQVKIWFQNRRYKCKRQR.

The protein belongs to the NK-2 homeobox family. As to quaternary structure, homodimer (via the homeobox); binds DNA as homodimer. Interacts (via the homeobox) with TBX5 (via the T-box); this complex binds DNA. Interacts with HIPK1 and HIPK2, but not HIPK3. Interacts with the C-terminal zinc finger of GATA4 through its homeobox domain. Also interacts with JARID2 which represses its ability to activate transcription of ANF. Interacts with FBLIM1. Interacts with TBX18. Interacts with histone methyltransferase NSD2 (via HMG box). Interacts with NEDD9. Interacts with TBX1. Expressed only in the heart.

The protein resides in the nucleus. Its function is as follows. Transcription factor required for the development of the heart and the spleen. During heart development, acts as a transcriptional activator of NPPA/ANF in cooperation with GATA4. May cooperate with TBX2 to negatively modulate expression of NPPA/ANF in the atrioventricular canal. Binds to the core DNA motif of NPPA promoter. Together with PBX1, required for spleen development through a mechanism that involves CDKN2B repression. Positively regulates transcription of genes such as COL3A1 and MMP2, resulting in increased pulmonary endothelial fibrosis in response to hypoxia. The sequence is that of Homeobox protein Nkx-2.5 (NKX2-5) from Homo sapiens (Human).